Reading from the N-terminus, the 290-residue chain is UPF0046 protein K07C11.7 (290 aa).

Residues 1 to 22 (MFHFSIGTVLISICWLAQWMEA) form the signal peptide. An N-linked (GlcNAc...) asparagine glycan is attached at asparagine 204.

It belongs to the UPF0046 family.

This Caenorhabditis elegans protein is UPF0046 protein K07C11.7.